A 138-amino-acid chain; its full sequence is ATP synthase epsilon chain (138 aa).

Belongs to the ATPase epsilon chain family. As to quaternary structure, F-type ATPases have 2 components, CF(1) - the catalytic core - and CF(0) - the membrane proton channel. CF(1) has five subunits: alpha(3), beta(3), gamma(1), delta(1), epsilon(1). CF(0) has three main subunits: a, b and c.

The protein localises to the cell membrane. Its function is as follows. Produces ATP from ADP in the presence of a proton gradient across the membrane. This is ATP synthase epsilon chain from Streptococcus suis (strain 98HAH33).